A 182-amino-acid polypeptide reads, in one-letter code: Adenine phosphoribosyltransferase (182 aa).

The protein belongs to the purine/pyrimidine phosphoribosyltransferase family. Homodimer.

It localises to the cytoplasm. It carries out the reaction AMP + diphosphate = 5-phospho-alpha-D-ribose 1-diphosphate + adenine. Its pathway is purine metabolism; AMP biosynthesis via salvage pathway; AMP from adenine: step 1/1. Its function is as follows. Catalyzes a salvage reaction resulting in the formation of AMP, that is energically less costly than de novo synthesis. The chain is Adenine phosphoribosyltransferase from Koribacter versatilis (strain Ellin345).